The following is a 520-amino-acid chain: RING-type E3 ubiquitin-protein ligase PPIL2 (520 aa).

A U-box domain is found at 35 to 108 (RRLPFDHCSL…GKYHCPVLFT (74 aa)). The stretch at 197–217 (LKNTNAETRETLQELYKEFKG) forms a coiled coil. Lys-216 is covalently cross-linked (Glycyl lysine isopeptide (Lys-Gly) (interchain with G-Cter in SUMO2)). One can recognise a PPIase cyclophilin-type domain in the interval 278-433 (KKGYVRLHTN…EEIRIDATTV (156 aa)). Residues 456 to 520 (APETKVKSSQ…SRGFGDFSSW (65 aa)) form a disordered region. The span at 463–474 (SSQPQAGSQGPQ) shows a compositional bias: low complexity. Ser-470 is subject to Phosphoserine. At Lys-482 the chain carries N6-acetyllysine.

Belongs to the cyclophilin-type PPIase family. PPIL2 subfamily. In terms of assembly, component of the minor spliceosome, which splices U12-type introns. Within this complex, interacts with PRPF8/PRP8, EFTUD2/SNU114 and PLRG1. Interacts with isoform 2 of BSG. Interacts (via the PPIase cyclophilin-type domain) with CRNKL1; they may form a trimeric complex with HSP90. In terms of tissue distribution, highest expression in thymus, pancreas and testis. Also detected in heart, placenta, lung, liver, skeletal muscle, kidney, spleen, prostate, ovary, small intestine and colon. Poorly detected in brain and leukocytes. Strong protein expression in lymph node (cortical, paracortical and medullar regions), thyroid (follicular epithelial cells), testis (developing spermatozoa), stomach (cells lining the gastric pit), pancreas, kidney (proximal and distal-tubule cells and collecting duct cells but not in glomeruli), endometrium and colon (goblet cells). Moderate protein expression in spleen, prostate (epithelium and squamous cell carcinomas), placenta and adrenal gland. Weak protein expression in liver, heart, breast, ovary, and lung. No protein expression in brain and bladder. High protein expression in most lymphomas and melanomas.

It is found in the nucleus. The catalysed reaction is S-ubiquitinyl-[E2 ubiquitin-conjugating enzyme]-L-cysteine + [acceptor protein]-L-lysine = [E2 ubiquitin-conjugating enzyme]-L-cysteine + N(6)-ubiquitinyl-[acceptor protein]-L-lysine.. The protein operates within protein modification; protein ubiquitination. In terms of biological role, has a ubiquitin-protein ligase activity acting as an E3 ubiquitin protein ligase or as an ubiquitin-ubiquitin ligase promoting elongation of ubiquitin chains on substrates. By mediating 'Lys-48'-linked polyubiquitination of proteins could target them for proteasomal degradation. May also function as a chaperone, playing a role in transport to the cell membrane of BSG/Basigin for instance. Probable inactive PPIase with no peptidyl-prolyl cis-trans isomerase activity. As a component of the minor spliceosome, involved in the splicing of U12-type introns in pre-mRNAs. The polypeptide is RING-type E3 ubiquitin-protein ligase PPIL2 (Homo sapiens (Human)).